The sequence spans 35 residues: uncharacterized protein (35 aa).

Residues 10 to 30 (LMITASFFAIFIIIVVSVLLL) traverse the membrane as a helical segment.

The protein resides in the membrane. This is an uncharacterized protein from Salmonella paratyphi A (strain ATCC 9150 / SARB42).